Consider the following 37-residue polypeptide: Large ribosomal subunit protein bL36c (37 aa).

Component of the chloroplast large ribosomal subunit (LSU). Mature 70S chloroplast ribosomes of higher plants consist of a small (30S) and a large (50S) subunit. The 30S small subunit contains 1 molecule of ribosomal RNA (16S rRNA) and 24 different proteins. The 50S large subunit contains 3 rRNA molecules (23S, 5S and 4.5S rRNA) and 33 different proteins.

It localises to the plastid. It is found in the chloroplast. Functionally, component of the chloroplast ribosome (chloro-ribosome), a dedicated translation machinery responsible for the synthesis of chloroplast genome-encoded proteins, including proteins of the transcription and translation machinery and components of the photosynthetic apparatus. In Spinacia oleracea (Spinach), this protein is Large ribosomal subunit protein bL36c (rpl36).